The chain runs to 509 residues: Lanosterol 14-alpha demethylase (509 aa).

A helical transmembrane segment spans residues Gly30–Phe50. Position 455 (Cys455) interacts with heme.

This sequence belongs to the cytochrome P450 family. Heme is required as a cofactor. Post-translationally, ubiquitinated by MARCHF6, leading to proteasomal degradation.

It is found in the endoplasmic reticulum membrane. The protein localises to the microsome membrane. The enzyme catalyses a 14alpha-methyl steroid + 3 reduced [NADPH--hemoprotein reductase] + 3 O2 = a Delta(14) steroid + formate + 3 oxidized [NADPH--hemoprotein reductase] + 4 H2O + 4 H(+). The catalysed reaction is lanosterol + 3 reduced [NADPH--hemoprotein reductase] + 3 O2 = 4,4-dimethyl-5alpha-cholesta-8,14,24-trien-3beta-ol + formate + 3 oxidized [NADPH--hemoprotein reductase] + 4 H2O + 4 H(+). It catalyses the reaction 24,25-dihydrolanosterol + 3 reduced [NADPH--hemoprotein reductase] + 3 O2 = 4,4-dimethyl-8,14-cholestadien-3beta-ol + formate + 3 oxidized [NADPH--hemoprotein reductase] + 4 H2O + 4 H(+). It carries out the reaction a 14alpha-methyl steroid + reduced [NADPH--hemoprotein reductase] + O2 = a 14alpha-hydroxymethyl steroid + oxidized [NADPH--hemoprotein reductase] + H2O + H(+). The enzyme catalyses a 14alpha-hydroxymethyl steroid + reduced [NADPH--hemoprotein reductase] + O2 = a 14alpha-formyl steroid + oxidized [NADPH--hemoprotein reductase] + 2 H2O + H(+). The catalysed reaction is a 14alpha-formyl steroid + reduced [NADPH--hemoprotein reductase] + O2 = a Delta(14) steroid + formate + oxidized [NADPH--hemoprotein reductase] + H2O + 2 H(+). It catalyses the reaction lanosterol + reduced [NADPH--hemoprotein reductase] + O2 = 32-hydroxylanosterol + oxidized [NADPH--hemoprotein reductase] + H2O + H(+). It carries out the reaction 32-hydroxylanosterol + reduced [NADPH--hemoprotein reductase] + O2 = 32-oxolanosterol + oxidized [NADPH--hemoprotein reductase] + 2 H2O + H(+). The enzyme catalyses 32-oxolanosterol + reduced [NADPH--hemoprotein reductase] + O2 = 4,4-dimethyl-5alpha-cholesta-8,14,24-trien-3beta-ol + formate + oxidized [NADPH--hemoprotein reductase] + H2O + 2 H(+). The catalysed reaction is 24,25-dihydrolanosterol + reduced [NADPH--hemoprotein reductase] + O2 = 32-hydroxy-24,25-dihydrolanosterol + oxidized [NADPH--hemoprotein reductase] + H2O + H(+). It catalyses the reaction 32-hydroxy-24,25-dihydrolanosterol + reduced [NADPH--hemoprotein reductase] + O2 = 32-oxo-24,25-dihydrolanosterol + oxidized [NADPH--hemoprotein reductase] + 2 H2O + H(+). It carries out the reaction 32-oxo-24,25-dihydrolanosterol + reduced [NADPH--hemoprotein reductase] + O2 = 4,4-dimethyl-8,14-cholestadien-3beta-ol + formate + oxidized [NADPH--hemoprotein reductase] + H2O + 2 H(+). It functions in the pathway steroid biosynthesis; zymosterol biosynthesis; zymosterol from lanosterol: step 1/6. Its activity is regulated as follows. Inhibited by azalanstat. Inhibited by azole antifungal agents ketoconazole, itraconazole and fluconazole. Its function is as follows. Sterol 14alpha-demethylase that plays a critical role in the cholesterol biosynthesis pathway, being cholesterol the major sterol component in mammalian membranes as well as a precursor for bile acid and steroid hormone synthesis. Cytochrome P450 monooxygenase that catalyzes the three-step oxidative removal of the 14alpha-methyl group (C-32) of sterols such as lanosterol (lanosta-8,24-dien-3beta-ol) and 24,25-dihydrolanosterol (DHL) in the form of formate, and converts the sterols to 4,4-dimethyl-5alpha-cholesta-8,14,24-trien-3beta-ol and 4,4-dimethyl-8,14-cholestadien-3beta-ol, respectively, which are intermediates of cholesterol biosynthesis. Can also demethylate substrates not intrinsic to mammals, such as eburicol (24-methylene-24,25-dihydrolanosterol), but at a lower rate than DHL. In Pongo abelii (Sumatran orangutan), this protein is Lanosterol 14-alpha demethylase.